Consider the following 848-residue polypeptide: Crooked neck-like protein 1 (848 aa).

Thr2 carries the post-translational modification N-acetylalanine. Positions Arg81–Ala106 are disordered. 17 HAT repeats span residues Asp222–Ser254, Lys256–Lys288, Arg290–Met322, Gly324–Arg355, Lys357–Lys388, Ala390–Asn425, Lys427–Lys461, Ile471–Ser503, Ala505–Asn539, Lys549–Arg585, Lys587–Gln618, Arg620–Ile652, Gly654–Glu688, Glu690–Ser721, Gly726–Thr767, Ser769–Pro807, and Asp809–Asp834. A mediates interaction with HSP90 region spans residues Met411 to Leu628. Ser503 carries the phosphoserine modification. The segment at Lys827 to Ser848 is disordered. Positions Gln828–Asp840 are enriched in basic and acidic residues.

The protein belongs to the crooked-neck family. As to quaternary structure, identified in the spliceosome C complex. Present in a spliceosome complex assembled in vitro containing CRNKL1, HPRP8BP and SNRPB2. Component of the minor spliceosome, which splices U12-type introns. Isoform 2 seems to be predominant in the spliceosome complex. Interacts with PPIL2 (via the PPIase cyclophilin-type domain); they may form a trimeric complex with HSP90. In terms of tissue distribution, widely expressed. Highly expressed in testis. Not detected in brain and lung.

The protein resides in the nucleus. The protein localises to the nucleus speckle. Its function is as follows. Involved in pre-mRNA splicing process. As a component of the minor spliceosome, involved in the splicing of U12-type introns in pre-mRNAs. This chain is Crooked neck-like protein 1 (CRNKL1), found in Homo sapiens (Human).